The sequence spans 390 residues: MLLTPKMFSSWLRQDVKKILKRKDSDAGERGKALEDLRASLFNRFRSPETPKRQQQQQHRICGPTVALTFNFVVAISIIFMNKWVLKNIGFEFPVFLTFIHYIVAYLLMALLKSFSLLPASPPSTKSSLLPLYTLGIVMSLSTGLANVSLKYNSVGFYQMAKIAVTPSIVFAEFLWYRKRVSFMKVVSLTVVSVGVAVATVTDLQFSLFGACVAFAWIIPSATNKILWSNMQQRENWTALALMWKTTPITLLFLVSMIPFLDPPGALSFNWSLTNTSAILVSALLGFFLQWSGALALGATSAITHVVLGQFKTCVLLLGNYYIFGSNSGFISVGGAFVAIMGTSLYTYLNTRGQSLKTSSSSSALSEKKSRFSDLKDDDKNLEPYGSEAV.

10 helical membrane-spanning segments follow: residues 61 to 81 (ICGP…IIFM), 89 to 109 (IGFE…YLLM), 128 to 148 (SLLP…LANV), 155 to 175 (VGFY…AEFL), 182 to 201 (SFMK…VATV), 206 to 228 (FSLF…KILW), 249 to 269 (ITLL…ALSF), 278 to 298 (AILV…LALG), 306 to 326 (VVLG…IFGS), and 329 to 349 (GFIS…YTYL). Residues 356-365 (LKTSSSSSAL) show a composition bias toward low complexity. Residues 356-390 (LKTSSSSSALSEKKSRFSDLKDDDKNLEPYGSEAV) are disordered. The span at 366 to 382 (SEKKSRFSDLKDDDKNL) shows a compositional bias: basic and acidic residues.

Belongs to the TPT transporter family. TPT (TC 2.A.7.9) subfamily.

The protein localises to the membrane. The protein is Nucleotide-sugar uncharacterized transporter 1 of Arabidopsis thaliana (Mouse-ear cress).